The primary structure comprises 4349 residues: Dynein heavy chain, cytoplasmic (4349 aa).

A stem region spans residues methionine 1 to asparagine 1907. 6 coiled-coil regions span residues tryptophan 459–lysine 480, leucine 1178–glutamine 1215, serine 1266–isoleucine 1293, glutamate 1334–leucine 1354, tyrosine 1560–valine 1577, and asparagine 1640–arginine 1670. AAA regions lie at residues tyrosine 1908 to serine 2133, asparagine 2201 to alanine 2459, glutamate 2565 to glycine 2814, and threonine 2908 to valine 3177. Glycine 1946–threonine 1953 lines the ATP pocket. A coiled-coil region spans residues alanine 2194–leucine 2217. ATP-binding positions include glycine 2239–serine 2246, glycine 2604–threonine 2611, and glycine 2946–threonine 2953. 3 coiled-coil regions span residues leucine 3186 to alanine 3294, glycine 3420 to arginine 3477, and aspartate 3774 to isoleucine 3807. The stalk stretch occupies residues leucine 3186–arginine 3477. AAA stretches follow at residues leucine 3563–alanine 3792 and alanine 4001–threonine 4213.

The protein belongs to the dynein heavy chain family. As to quaternary structure, consists of at least two heavy chains and a number of intermediate and light chains.

The protein resides in the cytoplasm. It is found in the cytoskeleton. Cytoplasmic dynein acts as a motor for the intracellular retrograde motility of vesicles and organelles along microtubules. Dynein has ATPase activity; the force-producing power stroke is thought to occur on release of ADP. This is Dynein heavy chain, cytoplasmic (DHC1) from Fusarium vanettenii (Neocosmospora pisi).